We begin with the raw amino-acid sequence, 276 residues long: Kallikrein-10 (276 aa).

A signal peptide spans 1–30; the sequence is MRAPHLHLSAASGARALAKLLPLLMAQLWA. Residue asparagine 39 is glycosylated (N-linked (GlcNAc...) asparagine). The Peptidase S1 domain occupies 47-274; it reads AYGSPCARGS…YMSWINKVIR (228 aa). 5 cysteine pairs are disulfide-bonded: cysteine 52–cysteine 162, cysteine 71–cysteine 87, cysteine 169–cysteine 235, cysteine 201–cysteine 215, and cysteine 225–cysteine 250. Active-site charge relay system residues include histidine 86 and aspartate 137. Catalysis depends on serine 229, which acts as the Charge relay system.

It belongs to the peptidase S1 family. Kallikrein subfamily. In terms of tissue distribution, expressed in breast, ovary and prostate.

It is found in the secreted. Its function is as follows. Has a tumor-suppressor role for NES1 in breast and prostate cancer. The polypeptide is Kallikrein-10 (KLK10) (Homo sapiens (Human)).